A 414-amino-acid polypeptide reads, in one-letter code: Enterobactin exporter EntS (414 aa).

The Cytoplasmic portion of the chain corresponds to 1 to 21 (MNRQSWLLNLSLLKTHPAFRA). A helical transmembrane segment spans residues 22 to 42 (VFLARFISIVSLGLLGVAVPV). Topologically, residues 43-55 (QIQMMTHSTWQVG) are periplasmic. Residues 56–76 (LSVTLTGGAMFIGLMVGGVLA) traverse the membrane as a helical segment. Over 77–83 (DRYERKK) the chain is Cytoplasmic. A helical membrane pass occupies residues 84–104 (VILLARGTCGIGFIGLCVNAL). Residues 105 to 109 (LPEPS) lie on the Periplasmic side of the membrane. Residues 110–130 (LLAIYLLGLWDGFFASLGVTA) form a helical membrane-spanning segment. Topologically, residues 131–156 (LLAATPALVGRENLMQAGAITMLTVR) are cytoplasmic. The chain crosses the membrane as a helical span at residues 157–177 (LGSVISPMLGGILLASGGVAW). A topological domain (periplasmic) is located at residue N178. A helical membrane pass occupies residues 179–199 (YGLAAAGTFITLLPLLTLPRL). The Cytoplasmic portion of the chain corresponds to 200-218 (PVPPQPRENPFIALLAAFR). A helical membrane pass occupies residues 219–239 (FLLASPLIGGIALLGGLVTMA). Over 240 to 256 (SAVRVLYPALAMSWQMS) the chain is Periplasmic. A helical membrane pass occupies residues 257–277 (AAQIGLLYAAIPLGAAIGALT). Topologically, residues 278–287 (SGQLAHSVRP) are cytoplasmic. The chain crosses the membrane as a helical span at residues 288–307 (GLIMLVSTVGSFLAVGLFAI). Over 308-313 (MPVWIA) the chain is Periplasmic. The chain crosses the membrane as a helical span at residues 314-336 (GVICLALFGWLSAISSLLQYTLL). The Cytoplasmic segment spans residues 337–356 (QTQTPENMLGRMNGLWTAQN). The chain crosses the membrane as a helical span at residues 357-377 (VTGDAIGAALLGGLGAMMTPV). Residue A378 is a topological domain, periplasmic. Residues 379-399 (SASVSGFGLVIIGLLLLLVLG) traverse the membrane as a helical segment. Topologically, residues 400–414 (ELRRFRQTPPVSDAG) are cytoplasmic.

This sequence belongs to the major facilitator superfamily. EntS (TC 2.A.1.38) family.

The protein localises to the cell inner membrane. Component of an export pathway for enterobactin. The protein is Enterobactin exporter EntS of Salmonella typhimurium (strain LT2 / SGSC1412 / ATCC 700720).